The following is a 122-amino-acid chain: Urease subunit beta (122 aa).

It belongs to the urease beta subunit family. As to quaternary structure, heterotrimer of UreA (gamma), UreB (beta) and UreC (alpha) subunits. Three heterotrimers associate to form the active enzyme.

The protein resides in the cytoplasm. The enzyme catalyses urea + 2 H2O + H(+) = hydrogencarbonate + 2 NH4(+). It participates in nitrogen metabolism; urea degradation; CO(2) and NH(3) from urea (urease route): step 1/1. In Acetivibrio thermocellus (strain ATCC 27405 / DSM 1237 / JCM 9322 / NBRC 103400 / NCIMB 10682 / NRRL B-4536 / VPI 7372) (Clostridium thermocellum), this protein is Urease subunit beta.